The following is a 297-amino-acid chain: Transmembrane protein 169 (297 aa).

The tract at residues 1–84 (MEEPALVEGQ…PKEEEGDDFI (84 aa)) is disordered. Over 1–159 (MEEPALVEGQ…CQLGADRGPH (159 aa)) the chain is Extracellular. The span at 9 to 18 (GQSQLPSPHH) shows a compositional bias: polar residues. A compositionally biased stretch (acidic residues) spans 60 to 84 (ETLDEEPGESEGGDQPKEEEGDDFI). Residues 160–180 (VVLWTLVCLPVVFLLSFVVSF) traverse the membrane as a helical segment. Topologically, residues 181 to 210 (YYGTITWYNIFLVYNEERTFWHKISCCPCL) are cytoplasmic. The chain crosses the membrane as a helical span at residues 211–231 (ILCYPVLIMAMASSLGLYAAV). Residues 232–297 (VQLSWSWEAW…ATQEIETSAV (66 aa)) are Extracellular-facing.

It is found in the membrane. The chain is Transmembrane protein 169 (TMEM169) from Bos taurus (Bovine).